The chain runs to 251 residues: MHKVVLLRHGESLWNMENRFTGWTDVDLSPKGIEEARESGKTLKAEGYTFDCAFTSVLKRAIRTLWIVLDELDRMWIPVYKSWRLNERHYGALQGLNKAETAKKYGEEQVKIWRRSVDVRPPALEKDDPRYPGFDPRYADLSEEEIPLTENLIDTINRVIPYWESTIAPTIKSGKKVLIVAHGNSLRGLVKYLDNLSKQEIMELNIPTGIPLVYELDDDLKPIRHYYLADEEKVKEKKELVENQGKIQGNS.

Substrate is bound by residues 8-15, 21-22, Arg60, 87-90, Lys98, 114-115, and 183-184; these read RHGESLWN, TG, ERHY, RR, and GN. The active-site Tele-phosphohistidine intermediate is the His9. Catalysis depends on Glu87, which acts as the Proton donor/acceptor.

The protein belongs to the phosphoglycerate mutase family. BPG-dependent PGAM subfamily.

It carries out the reaction (2R)-2-phosphoglycerate = (2R)-3-phosphoglycerate. It participates in carbohydrate degradation; glycolysis; pyruvate from D-glyceraldehyde 3-phosphate: step 3/5. Its function is as follows. Catalyzes the interconversion of 2-phosphoglycerate and 3-phosphoglycerate. This chain is 2,3-bisphosphoglycerate-dependent phosphoglycerate mutase, found in Thermoanaerobacter pseudethanolicus (strain ATCC 33223 / 39E) (Clostridium thermohydrosulfuricum).